The chain runs to 339 residues: Putative pectinesterase 10 (339 aa).

Positions 1–28 (MKGVTIHNFCYSYFKVCLLVMSLAYGSA) are cleaved as a signal peptide. A glycan (N-linked (GlcNAc...) asparagine) is linked at N112. T116 is a substrate binding site. The active-site Proton donor is the D169. D190 (nucleophile) is an active-site residue. Substrate-binding residues include R252 and W254. A glycan (N-linked (GlcNAc...) asparagine) is linked at N322.

The protein belongs to the pectinesterase family. As to expression, expressed in siliques.

The protein localises to the secreted. It localises to the cell wall. The catalysed reaction is [(1-&gt;4)-alpha-D-galacturonosyl methyl ester](n) + n H2O = [(1-&gt;4)-alpha-D-galacturonosyl](n) + n methanol + n H(+). It functions in the pathway glycan metabolism; pectin degradation; 2-dehydro-3-deoxy-D-gluconate from pectin: step 1/5. Acts in the modification of cell walls via demethylesterification of cell wall pectin. This chain is Putative pectinesterase 10 (PME10), found in Arabidopsis thaliana (Mouse-ear cress).